The primary structure comprises 889 residues: Alanine--tRNA ligase (889 aa).

Zn(2+) is bound by residues H566, H570, C683, and H687.

The protein belongs to the class-II aminoacyl-tRNA synthetase family. Zn(2+) is required as a cofactor.

Its subcellular location is the cytoplasm. The catalysed reaction is tRNA(Ala) + L-alanine + ATP = L-alanyl-tRNA(Ala) + AMP + diphosphate. In terms of biological role, catalyzes the attachment of alanine to tRNA(Ala) in a two-step reaction: alanine is first activated by ATP to form Ala-AMP and then transferred to the acceptor end of tRNA(Ala). Also edits incorrectly charged Ser-tRNA(Ala) and Gly-tRNA(Ala) via its editing domain. In Herpetosiphon aurantiacus (strain ATCC 23779 / DSM 785 / 114-95), this protein is Alanine--tRNA ligase.